The primary structure comprises 337 residues: MTQQLKLGYKASAEQFGPRELVELAVLAEKHGMDSATVSDHFQPWRHNGGHAPFSLSWMTAVGERTKRLQLGTSVLTPTFRYNPAVIAQAFATMGCLYPGRIMLGAGTGEALNEIATGYTGQWPEFRERYARLRESVQLMRDLWTGERTDFKGEYYSTTGASIYDVPECGIPVYIAAGGPVVARYAGRAGDGFICTSGKGMELYTDKLMPAVSEGATKAERDVTSIDKMIEIKISYDTDPEAALENTRFWAPLSLTQEQKHSIEDPIEMEAAADALPIEQVAKRWIVSSDPDDAVAQVKQYIDAGLNHLVFHAPGHDQKRFLELFDRDLAPRLRALG.

Asp40 contacts coenzyme F420-(gamma-Glu)n. The active-site Proton donor is the His41. Coenzyme F420-(gamma-Glu)n-binding positions include Thr77 and 108–109 (TG). Glu110 functions as the Proton acceptor in the catalytic mechanism. Coenzyme F420-(gamma-Glu)n-binding positions include Asn113, 178 to 179 (GG), and 181 to 182 (VV). 4 residues coordinate substrate: Thr196, Lys199, Lys260, and Arg284.

It belongs to the F420-dependent glucose-6-phosphate dehydrogenase family. As to quaternary structure, homodimer.

It catalyses the reaction oxidized coenzyme F420-(gamma-L-Glu)(n) + D-glucose 6-phosphate + H(+) = 6-phospho-D-glucono-1,5-lactone + reduced coenzyme F420-(gamma-L-Glu)(n). In terms of biological role, catalyzes the coenzyme F420-dependent oxidation of glucose 6-phosphate (G6P) to 6-phosphogluconolactone. This is F420-dependent glucose-6-phosphate dehydrogenase 2 from Rhodococcus jostii (strain RHA1).